The sequence spans 118 residues: Ig heavy chain V region X24 (118 aa).

Residues 1–111 enclose the Ig-like domain; that stretch reads EVKLLESGGG…GYFDYWGQGT (111 aa).

The sequence is that of Ig heavy chain V region X24 from Mus musculus (Mouse).